The sequence spans 344 residues: Sulfate/thiosulfate import ATP-binding protein CysA (344 aa).

Residues 3 to 233 (ILIDNVSKNF…PESAFVMSFL (231 aa)) enclose the ABC transporter domain. 35 to 42 (GPSGCGKS) contacts ATP.

The protein belongs to the ABC transporter superfamily. Sulfate/tungstate importer (TC 3.A.1.6) family. The complex is composed of two ATP-binding proteins (CysA), two transmembrane proteins (CysT and CysW) and a solute-binding protein (CysP).

The protein resides in the cell inner membrane. The catalysed reaction is sulfate(out) + ATP + H2O = sulfate(in) + ADP + phosphate + H(+). The enzyme catalyses thiosulfate(out) + ATP + H2O = thiosulfate(in) + ADP + phosphate + H(+). Part of the ABC transporter complex CysAWTP involved in sulfate/thiosulfate import. Responsible for energy coupling to the transport system. The polypeptide is Sulfate/thiosulfate import ATP-binding protein CysA (Gloeobacter violaceus (strain ATCC 29082 / PCC 7421)).